The chain runs to 473 residues: MAP kinase-activated protein kinase 5 (473 aa).

Residues 22-304 form the Protein kinase domain; that stretch reads INWTQKLGAG…IEGVLDHPWL (283 aa). Residues 28–36 and lysine 51 contribute to the ATP site; that span reads LGAGISGPV. Serine 115 carries the post-translational modification Phosphoserine; by PKA. Catalysis depends on aspartate 148, which acts as the Proton acceptor. Residue threonine 182 is modified to Phosphothreonine; by MAPK11, MAPK14, MAPK4, MAPK6 and PKA. Phosphoserine occurs at positions 212 and 354. Residues 409–440 are a coiled coil; the sequence is ENEDEKLNEVMQEAWKYNRECKLLRDTLQSFS.

This sequence belongs to the protein kinase superfamily. CAMK Ser/Thr protein kinase family. Interacts with ERK3/MAPK6 and ERK4/MAPK4 (via FRIEDE motif); the interaction is direct. Interacts with YWHAE; the interaction prevents phosphorylation of HSP27/HSPB1 leading to disrupt F-actin polymerization. Interacts with SQSTM1. Post-translationally, phosphorylated on Thr-182 ERK3/MAPK6 or ERK4/MAPK4; which is the regulatory phosphorylation site and is located on the T-loop/loop 12, leading to activation. Phosphorylation at Thr-182 by p38-alpha/MAPK14, p38-beta/MAPK11 is subject to debate. Phosphorylated at Ser-115 by PKA/PRKACA, leading to localization to the cytoplasm. Autophosphorylated. Expressed ubiquitously.

Its subcellular location is the cytoplasm. It localises to the nucleus. It catalyses the reaction L-seryl-[protein] + ATP = O-phospho-L-seryl-[protein] + ADP + H(+). The catalysed reaction is L-threonyl-[protein] + ATP = O-phospho-L-threonyl-[protein] + ADP + H(+). Activated following phosphorylation at Thr-182 by p38-alpha/MAPK14, p38-beta/MAPK11, ERK2/MAPK1, ERK3/MAPK6, and ERK4/MAPK4. Activated by stress-related extracellular stimuli; such as H(2)O(2), arsenite, anisomycin TNF alpha and also PMA and the calcium ionophore A23187; but to a lesser extent. In vitro, activated by SQSTM1. Inhibited by diterpenoid alkaloid noroxoaconitine. In terms of biological role, tumor suppressor serine/threonine-protein kinase involved in mTORC1 signaling and post-transcriptional regulation. Phosphorylates FOXO3, ERK3/MAPK6, ERK4/MAPK4, HSP27/HSPB1, p53/TP53 and RHEB. Acts as a tumor suppressor by mediating Ras-induced senescence and phosphorylating p53/TP53. Involved in post-transcriptional regulation of MYC by mediating phosphorylation of FOXO3: phosphorylation of FOXO3 leads to promote nuclear localization of FOXO3, enabling expression of miR-34b and miR-34c, 2 post-transcriptional regulators of MYC that bind to the 3'UTR of MYC transcript and prevent MYC translation. Acts as a negative regulator of mTORC1 signaling by mediating phosphorylation and inhibition of RHEB. Part of the atypical MAPK signaling via its interaction with ERK3/MAPK6 or ERK4/MAPK4: the precise role of the complex formed with ERK3/MAPK6 or ERK4/MAPK4 is still unclear, but the complex follows a complex set of phosphorylation events: upon interaction with atypical MAPK (ERK3/MAPK6 or ERK4/MAPK4), ERK3/MAPK6 (or ERK4/MAPK4) is phosphorylated and then mediates phosphorylation and activation of MAPKAPK5, which in turn phosphorylates ERK3/MAPK6 (or ERK4/MAPK4). Mediates phosphorylation of HSP27/HSPB1 in response to PKA/PRKACA stimulation, inducing F-actin rearrangement. The polypeptide is MAP kinase-activated protein kinase 5 (MAPKAPK5) (Homo sapiens (Human)).